A 522-amino-acid polypeptide reads, in one-letter code: Protein DETOXIFICATION 31 (522 aa).

12 helical membrane-spanning segments follow: residues 89-109 (GAVTQVFAGHISTLALAAVSI), 113-133 (VIAGFSFGIMLGMGSALETLC), 154-174 (VILSVTALFLSLIYIFAAPIL), 183-203 (ISAMAGIFSIYMIPQIFAYAI), 217-237 (IMVMAGISGVVLVIHSFFTWL), 249-269 (LALVLNTSWWVIVVAQLVYIF), 299-319 (AAMLCLEIWYFMALVLFAGYL), 324-344 (VSVAALSICMNILGWAAMVAF), 371-391 (VVAVILSTAIGMFIAAGLLFF), 415-435 (MLAFCIVINNVQPVLSGVAVG), 441-461 (VVAYVNIACYYLFGVPFGLLL), and 471-491 (GIWWGMVTGTFVQSIVLTWMI).

Belongs to the multi antimicrobial extrusion (MATE) (TC 2.A.66.1) family.

Its subcellular location is the membrane. Its function is as follows. Positively mediates root hair elongation. The sequence is that of Protein DETOXIFICATION 31 from Arabidopsis thaliana (Mouse-ear cress).